The following is a 152-amino-acid chain: Mediator of RNA polymerase II transcription subunit 9 (152 aa).

The stretch at isoleucine 98–isoleucine 150 forms a coiled coil.

Belongs to the Mediator complex subunit 9 family. In terms of assembly, component of the Mediator complex.

Its subcellular location is the nucleus. Its function is as follows. Component of the Mediator complex, a coactivator involved in the regulated transcription of nearly all RNA polymerase II-dependent genes. Mediator functions as a bridge to convey information from gene-specific regulatory proteins to the basal RNA polymerase II transcription machinery. Mediator is recruited to promoters by direct interactions with regulatory proteins and serves as a scaffold for the assembly of a functional preinitiation complex with RNA polymerase II and the general transcription factors. In Candida glabrata (strain ATCC 2001 / BCRC 20586 / JCM 3761 / NBRC 0622 / NRRL Y-65 / CBS 138) (Yeast), this protein is Mediator of RNA polymerase II transcription subunit 9 (CSE2).